The primary structure comprises 364 residues: Pectinesterase 1 (364 aa).

Residues 1–22 form the signal peptide; that stretch reads MSCIAVEAVLLGILLYIPIVLS. N-linked (GlcNAc...) asparagine glycosylation is present at asparagine 103. Aspartate 220 is an active-site residue.

It belongs to the pectinesterase family. In terms of processing, glycosylated. As to expression, expressed in pollen.

Its subcellular location is the secreted. It catalyses the reaction [(1-&gt;4)-alpha-D-galacturonosyl methyl ester](n) + n H2O = [(1-&gt;4)-alpha-D-galacturonosyl](n) + n methanol + n H(+). It participates in glycan metabolism; pectin degradation; 2-dehydro-3-deoxy-D-gluconate from pectin: step 1/5. Functionally, catalyzes the demethylesterification of homogalacturonan components of pectin. May be involved in pollen tube development. This Olea europaea (Common olive) protein is Pectinesterase 1.